The primary structure comprises 143 residues: Hemoglobin subunit alpha (143 aa).

The Globin domain occupies 3 to 143; sequence KLSGEDKANV…TMRLCISKYR (141 aa). Histidine 60 is a binding site for O2. Histidine 89 is a heme b binding site.

The protein belongs to the globin family. As to quaternary structure, heterotetramer of two alpha chains and two beta chains. Red blood cells.

Its function is as follows. Involved in oxygen transport from the lung to the various peripheral tissues. The protein is Hemoglobin subunit alpha (HBA) of Ambystoma mexicanum (Axolotl).